The primary structure comprises 296 residues: Probable lipid kinase YegS-like (296 aa).

A DAGKc domain is found at 1-130; that stretch reads MPHTLLILNG…IDLAQVNDKH (130 aa). Residues Thr-37, 63–69, and Thr-92 contribute to the ATP site; that span reads GDGTINE. 3 residues coordinate Mg(2+): Leu-212, Asp-215, and Leu-217. The Proton acceptor role is filled by Glu-268.

Belongs to the diacylglycerol/lipid kinase family. YegS lipid kinase subfamily. Requires Mg(2+) as cofactor. Ca(2+) serves as cofactor.

It is found in the cytoplasm. Functionally, probably phosphorylates lipids; the in vivo substrate is unknown. This chain is Probable lipid kinase YegS-like, found in Yersinia enterocolitica serotype O:8 / biotype 1B (strain NCTC 13174 / 8081).